We begin with the raw amino-acid sequence, 265 residues long: tRNA (guanine-N(7)-)-methyltransferase (265 aa).

Basic and acidic residues predominate over residues 1-16; sequence MNHDDPNASGVPHDDA. Residues 1 to 40 form a disordered region; the sequence is MNHDDPNASGVPHDDANDAAPASASDAARATGHADDESSP. Low complexity predominate over residues 18 to 31; sequence DAAPASASDAARAT. Glu-95, Glu-120, Asp-147, and Asp-170 together coordinate S-adenosyl-L-methionine. The active site involves Asp-170. Substrate contacts are provided by residues Lys-174, Asp-206, and 241–244; that span reads TKFE.

It belongs to the class I-like SAM-binding methyltransferase superfamily. TrmB family.

The catalysed reaction is guanosine(46) in tRNA + S-adenosyl-L-methionine = N(7)-methylguanosine(46) in tRNA + S-adenosyl-L-homocysteine. The protein operates within tRNA modification; N(7)-methylguanine-tRNA biosynthesis. Functionally, catalyzes the formation of N(7)-methylguanine at position 46 (m7G46) in tRNA. The chain is tRNA (guanine-N(7)-)-methyltransferase from Burkholderia thailandensis (strain ATCC 700388 / DSM 13276 / CCUG 48851 / CIP 106301 / E264).